Here is a 143-residue protein sequence, read N- to C-terminus: Crossover junction endodeoxyribonuclease Hjc (143 aa).

Glutamate 12 contributes to the Mg(2+) binding site. The active site involves serine 32. Mg(2+) is bound by residues aspartate 42 and glutamate 55.

It belongs to the Holliday junction resolvase Hjc family. In terms of assembly, homodimer. Requires Mg(2+) as cofactor.

It carries out the reaction Endonucleolytic cleavage at a junction such as a reciprocal single-stranded crossover between two homologous DNA duplexes (Holliday junction).. In terms of biological role, a structure-specific endonuclease that resolves Holliday junction (HJ) intermediates during genetic recombination. Cleaves 4-way DNA junctions introducing paired nicks in opposing strands, leaving a 5'-terminal phosphate and a 3'-terminal hydroxyl group that are subsequently ligated to produce recombinant products. Functionally, hjc, Hjm (Hel308) and PINA coordinate HJ migration and cleavage of replication forks in a coordinated way. In Saccharolobus islandicus (strain REY15A) (Sulfolobus islandicus), this protein is Crossover junction endodeoxyribonuclease Hjc.